The following is a 444-amino-acid chain: MTTRQPLYKSLYFQVIVAICIGIALGHYYPQFGVAVKPLGDGFIKLIKMIIAPIIFCTVVSGIAGMQNMKSVGKTGGYALLYFEIVSTIALLVGLIVVNIVQPGNGMHIDVSTLDASKVATYVAQGADQSVVGFLLNVIPTTIVGAFATGDILQVLMFSVIFGFALHRLGAYGKPILDFIDRFAHVMFNIINMIMKLAPIGAFGAMAFTIGAYGVGSLVQLGQLMICFYITCLAFILIVLGGIARMHGFSVLKMIRYIREELLIVLGTSSSESVLPRMLIKMERLGAKKSVVGLVIPTGYSFNLDGTAIYLTMAAVFIAQATDTHMDITHQITLLVVLLLSSKGAAGVTGSGFIVLAATLSAVGHLPVAGLALILGIDRFMSEARALTNLVGNAVATIVVAKWVKELDTDVLDAELASGGRGIADTRPEDDLGVAEGPTPSNVK.

The next 9 membrane-spanning stretches (helical) occupy residues 15–35, 46–66, 78–98, 143–163, 199–219, 224–244, 291–311, 332–352, and 354–374; these read VIVA…FGVA, LIKM…IAGM, YALL…LIVV, IVGA…VIFG, PIGA…GSLV, LMIC…GGIA, VVGL…AIYL, ITLL…TGSG, and IVLA…LALI. The disordered stretch occupies residues 422–444; it reads GIADTRPEDDLGVAEGPTPSNVK.

The protein belongs to the dicarboxylate/amino acid:cation symporter (DAACS) (TC 2.A.23) family.

Its subcellular location is the cell inner membrane. Functionally, responsible for the transport of dicarboxylates such as succinate, fumarate, and malate from the periplasm across the membrane. In Pseudomonas fluorescens (strain Pf0-1), this protein is C4-dicarboxylate transport protein.